A 427-amino-acid chain; its full sequence is Phosphoribosylamine--glycine ligase (427 aa).

One can recognise an ATP-grasp domain in the interval 109–313 (RNLMAEYKIE…LAEVVTGITE (205 aa)). 136–191 (VRDHDGDLAVKPIGLTGGKGVRIMGEQVDRAGAIEYIREINGGVVLEERLTGEEFT) serves as a coordination point for ATP. The Mg(2+) site is built by Gln-271, Glu-283, and Asn-285. The Mn(2+) site is built by Gln-271, Glu-283, and Asn-285.

Belongs to the GARS family. The cofactor is Mg(2+). Mn(2+) serves as cofactor.

It carries out the reaction 5-phospho-beta-D-ribosylamine + glycine + ATP = N(1)-(5-phospho-beta-D-ribosyl)glycinamide + ADP + phosphate + H(+). It participates in purine metabolism; IMP biosynthesis via de novo pathway; N(1)-(5-phospho-D-ribosyl)glycinamide from 5-phospho-alpha-D-ribose 1-diphosphate: step 2/2. The chain is Phosphoribosylamine--glycine ligase from Methanoregula boonei (strain DSM 21154 / JCM 14090 / 6A8).